The sequence spans 315 residues: PIH1 domain-containing protein 2 (315 aa).

This sequence belongs to the PIH1 family.

This Mus musculus (Mouse) protein is PIH1 domain-containing protein 2 (Pih1d2).